The primary structure comprises 365 residues: Protein RecA (365 aa).

ATP is bound at residue 73–80; sequence GPESSGKT.

Belongs to the RecA family.

It localises to the cytoplasm. Its function is as follows. Can catalyze the hydrolysis of ATP in the presence of single-stranded DNA, the ATP-dependent uptake of single-stranded DNA by duplex DNA, and the ATP-dependent hybridization of homologous single-stranded DNAs. It interacts with LexA causing its activation and leading to its autocatalytic cleavage. This Prochlorococcus marinus (strain MIT 9215) protein is Protein RecA.